Consider the following 188-residue polypeptide: Elongation factor P (188 aa).

Lys-34 is subject to N6-(3,6-diaminohexanoyl)-5-hydroxylysine.

It belongs to the elongation factor P family. In terms of processing, may be beta-lysylated on the epsilon-amino group of Lys-34 by the combined action of EpmA and EpmB, and then hydroxylated on the C5 position of the same residue by EpmC (if this protein is present). Lysylation is critical for the stimulatory effect of EF-P on peptide-bond formation. The lysylation moiety may extend toward the peptidyltransferase center and stabilize the terminal 3-CCA end of the tRNA. Hydroxylation of the C5 position on Lys-34 may allow additional potential stabilizing hydrogen-bond interactions with the P-tRNA.

Its subcellular location is the cytoplasm. The protein operates within protein biosynthesis; polypeptide chain elongation. Functionally, involved in peptide bond synthesis. Alleviates ribosome stalling that occurs when 3 or more consecutive Pro residues or the sequence PPG is present in a protein, possibly by augmenting the peptidyl transferase activity of the ribosome. Modification of Lys-34 is required for alleviation. The polypeptide is Elongation factor P (Pseudoalteromonas translucida (strain TAC 125)).